The following is a 95-amino-acid chain: Citrate lyase acyl carrier protein (95 aa).

Ser14 bears the O-(phosphoribosyl dephospho-coenzyme A)serine mark.

It belongs to the CitD family. As to quaternary structure, oligomer with a subunit composition of (alpha,beta,gamma)6.

It is found in the cytoplasm. Covalent carrier of the coenzyme of citrate lyase. The protein is Citrate lyase acyl carrier protein of Haemophilus influenzae (strain PittEE).